A 706-amino-acid chain; its full sequence is Protein kinase C theta type (706 aa).

The region spanning 1–107 (MSPFLRIGLS…KNNGKTEIWL (107 aa)) is the C2 domain. Position 90 is a phosphotyrosine; by LCK (Tyr90). The segment at 159-209 (CHEFTATFFPQPTFCSVCHEFVWGLNKQGYQCRQCNAAIHKKCIDKVIAKC) adopts a Phorbol-ester/DAG-type 1 zinc-finger fold. A Phosphothreonine; by autocatalysis modification is found at Thr219. Residues 231–281 (PHRFKVYNYKSPTFCEHCGTLLWGLARQGLKCDACGMNVHHRCQTKVANLC) form a Phorbol-ester/DAG-type 2 zinc finger. Residue Ser348 is modified to Phosphoserine. The 255-residue stretch at 380–634 (FILHKMLGKG…RGDIRQHPLF (255 aa)) folds into the Protein kinase domain. ATP-binding positions include 386–394 (LGKGSFGKV) and Lys409. Asp504 functions as the Proton acceptor in the catalytic mechanism. Thr538 bears the Phosphothreonine; by PDPK1 mark. The 72-residue stretch at 635–706 (REINWEELER…MNPGMERLIS (72 aa)) folds into the AGC-kinase C-terminal domain. Ser676, Ser685, and Ser695 each carry phosphoserine.

Belongs to the protein kinase superfamily. AGC Ser/Thr protein kinase family. PKC subfamily. Part of a lipid raft complex composed at least of BCL10, CARD11, MALT1 and IKBKB. Interacts with GLRX3 (via N-terminus). Interacts with ECT2. Interacts with CCDC88A/GIV; the interaction leads to phosphorylation of CCDC88A and inhibition of its guanine nucleotide exchange factor activity. Interacts with PRKCH upstream open reading frame 2; the interaction leads to inhibition of kinase activity. Interacts with CD28. It depends on Mg(2+) as a cofactor. In terms of processing, autophosphorylation at Thr-219 is required for targeting to the TCR and cellular function of PRKCQ upon antigen receptor ligation. Following TCR stimulation, phosphorylated at Tyr-90 and Ser-685. Expressed in skeletal muscle, T-cells, megakaryoblastic cells and platelets.

It is found in the cytoplasm. The protein resides in the cell membrane. The enzyme catalyses L-seryl-[protein] + ATP = O-phospho-L-seryl-[protein] + ADP + H(+). The catalysed reaction is L-threonyl-[protein] + ATP = O-phospho-L-threonyl-[protein] + ADP + H(+). With respect to regulation, novel PKCs (PRKCD, PRKCE, PRKCH and PRKCQ) are calcium-insensitive, but activated by diacylglycerol (DAG) and phosphatidylserine. Three specific sites; Thr-538 (activation loop of the kinase domain), Ser-676 (turn motif) and Ser-695 (hydrophobic region), need to be phosphorylated for its full activation. Inhibited by PRKCH upstream open reading frame 2. In terms of biological role, calcium-independent, phospholipid- and diacylglycerol (DAG)-dependent serine/threonine-protein kinase that mediates non-redundant functions in T-cell receptor (TCR) signaling, including T-cells activation, proliferation, differentiation and survival, by mediating activation of multiple transcription factors such as NF-kappa-B, JUN, NFATC1 and NFATC2. In TCR-CD3/CD28-co-stimulated T-cells, is required for the activation of NF-kappa-B and JUN, which in turn are essential for IL2 production, and participates in the calcium-dependent NFATC1 and NFATC2 transactivation. Mediates the activation of the canonical NF-kappa-B pathway (NFKB1) by direct phosphorylation of CARD11 on several serine residues, inducing CARD11 association with lipid rafts and recruitment of the BCL10-MALT1 complex, which then activates IKK complex, resulting in nuclear translocation and activation of NFKB1. May also play an indirect role in activation of the non-canonical NF-kappa-B (NFKB2) pathway. In the signaling pathway leading to JUN activation, acts by phosphorylating the mediator STK39/SPAK and may not act through MAP kinases signaling. Plays a critical role in TCR/CD28-induced NFATC1 and NFATC2 transactivation by participating in the regulation of reduced inositol 1,4,5-trisphosphate generation and intracellular calcium mobilization. After costimulation of T-cells through CD28 can phosphorylate CBLB and is required for the ubiquitination and subsequent degradation of CBLB, which is a prerequisite for the activation of TCR. During T-cells differentiation, plays an important role in the development of T-helper 2 (Th2) cells following immune and inflammatory responses, and, in the development of inflammatory autoimmune diseases, is necessary for the activation of IL17-producing Th17 cells. May play a minor role in Th1 response. Upon TCR stimulation, mediates T-cell protective survival signal by phosphorylating BAD, thus protecting T-cells from BAD-induced apoptosis, and by up-regulating BCL-X(L)/BCL2L1 levels through NF-kappa-B and JUN pathways. In platelets, regulates signal transduction downstream of the ITGA2B, CD36/GP4, F2R/PAR1 and F2RL3/PAR4 receptors, playing a positive role in 'outside-in' signaling and granule secretion signal transduction. May relay signals from the activated ITGA2B receptor by regulating the uncoupling of WASP and WIPF1, thereby permitting the regulation of actin filament nucleation and branching activity of the Arp2/3 complex. May mediate inhibitory effects of free fatty acids on insulin signaling by phosphorylating IRS1, which in turn blocks IRS1 tyrosine phosphorylation and downstream activation of the PI3K/AKT pathway. Phosphorylates MSN (moesin) in the presence of phosphatidylglycerol or phosphatidylinositol. Phosphorylates PDPK1 at 'Ser-504' and 'Ser-532' and negatively regulates its ability to phosphorylate PKB/AKT1. Phosphorylates CCDC88A/GIV and inhibits its guanine nucleotide exchange factor activity. Phosphorylates and activates LRRK1, which phosphorylates RAB proteins involved in intracellular trafficking. This Homo sapiens (Human) protein is Protein kinase C theta type (PRKCQ).